Reading from the N-terminus, the 216-residue chain is Phosphatidylserine decarboxylase proenzyme (216 aa).

Catalysis depends on Ser185, which acts as the Schiff-base intermediate with substrate; via pyruvic acid. A Pyruvic acid (Ser); by autocatalysis modification is found at Ser185.

It belongs to the phosphatidylserine decarboxylase family. PSD-A subfamily. Heterodimer of a large membrane-associated beta subunit and a small pyruvoyl-containing alpha subunit. The cofactor is pyruvate. Post-translationally, is synthesized initially as an inactive proenzyme. Formation of the active enzyme involves a self-maturation process in which the active site pyruvoyl group is generated from an internal serine residue via an autocatalytic post-translational modification. Two non-identical subunits are generated from the proenzyme in this reaction, and the pyruvate is formed at the N-terminus of the alpha chain, which is derived from the carboxyl end of the proenzyme. The post-translation cleavage follows an unusual pathway, termed non-hydrolytic serinolysis, in which the side chain hydroxyl group of the serine supplies its oxygen atom to form the C-terminus of the beta chain, while the remainder of the serine residue undergoes an oxidative deamination to produce ammonia and the pyruvoyl prosthetic group on the alpha chain.

The protein localises to the cell membrane. It catalyses the reaction a 1,2-diacyl-sn-glycero-3-phospho-L-serine + H(+) = a 1,2-diacyl-sn-glycero-3-phosphoethanolamine + CO2. Its pathway is phospholipid metabolism; phosphatidylethanolamine biosynthesis; phosphatidylethanolamine from CDP-diacylglycerol: step 2/2. Its function is as follows. Catalyzes the formation of phosphatidylethanolamine (PtdEtn) from phosphatidylserine (PtdSer). This is Phosphatidylserine decarboxylase proenzyme from Nitrosomonas eutropha (strain DSM 101675 / C91 / Nm57).